The chain runs to 248 residues: Ribonuclease PH (248 aa).

Residues Arg-86 and 124-126 (GTR) contribute to the phosphate site.

The protein belongs to the RNase PH family. In terms of assembly, homohexameric ring arranged as a trimer of dimers.

It catalyses the reaction tRNA(n+1) + phosphate = tRNA(n) + a ribonucleoside 5'-diphosphate. Its function is as follows. Phosphorolytic 3'-5' exoribonuclease that plays an important role in tRNA 3'-end maturation. Removes nucleotide residues following the 3'-CCA terminus of tRNAs; can also add nucleotides to the ends of RNA molecules by using nucleoside diphosphates as substrates, but this may not be physiologically important. Probably plays a role in initiation of 16S rRNA degradation (leading to ribosome degradation) during starvation. The chain is Ribonuclease PH from Listeria innocua serovar 6a (strain ATCC BAA-680 / CLIP 11262).